We begin with the raw amino-acid sequence, 177 residues long: MSRIGRLPITIPAGVDVTIDGDRVSVKGPKGQLEHSLPTPITATLEEGQVTVARPDDERESRSLHGLTRTLISNMVEGVTNGFSKQLEVVGTGYRVQAKGQDLEFALGYSHPVPVKAPQGITFTVEGNRVTVAGIDKQQVGETAANIRKLRRPDPYKGKGVRYAGEQIRRKAGKAGK.

The protein belongs to the universal ribosomal protein uL6 family. In terms of assembly, part of the 50S ribosomal subunit.

This protein binds to the 23S rRNA, and is important in its secondary structure. It is located near the subunit interface in the base of the L7/L12 stalk, and near the tRNA binding site of the peptidyltransferase center. This is Large ribosomal subunit protein uL6 from Micrococcus luteus (strain ATCC 4698 / DSM 20030 / JCM 1464 / CCM 169 / CCUG 5858 / IAM 1056 / NBRC 3333 / NCIMB 9278 / NCTC 2665 / VKM Ac-2230) (Micrococcus lysodeikticus).